The primary structure comprises 146 residues: UPF0178 protein BCAH820_3075 (146 aa).

Belongs to the UPF0178 family.

In Bacillus cereus (strain AH820), this protein is UPF0178 protein BCAH820_3075.